A 525-amino-acid chain; its full sequence is Ubiquitin carboxyl-terminal hydrolase 22 (525 aa).

A UBP-type zinc finger spans residues 21–138 (PGCSHLGSFK…KEEQRKAWKM (118 aa)). Zn(2+) contacts are provided by Cys23, His25, Cys63, Cys66, Cys76, Cys79, Cys84, His89, His93, His99, Cys112, and Cys115. An N6-acetyllysine modification is found at Lys129. Position 147 is a phosphothreonine; by CDK1 (Thr147). Positions 176-520 (RGLINLGNTC…EGYLLFYHKQ (345 aa)) constitute a USP domain. Cys185 acts as the Nucleophile in catalysis. Ser237 carries the phosphoserine; by CDK1 modification. His479 (proton acceptor) is an active-site residue.

The protein belongs to the peptidase C19 family. UBP8 subfamily. In terms of assembly, component of some SAGA transcription coactivator-HAT complexes, at least composed of ATXN7, ATXN7L3, ENY2, GCN5L2, SUPT3H, TAF10, TRRAP and USP22. Within the SAGA complex, ATXN7L3, ENY2 and USP22 form a subcomplex required for histone deubiquitination. Interacts directly with ATXN7L3; leading to its recruitment to the SAGA complex. Interacts with ATXN7L3 and weakly with ATXN7L3B. Interacts with MED1. Post-translationally, phosphorylated in G2/M phase, but not in G1 phase by CDK1. In terms of processing, ubiquitinated and subsequently degraded in a CDC20-dependent manner. As to expression, moderately expressed in various tissues including heart and skeletal muscle, and weakly expressed in lung and liver.

It is found in the nucleus. It localises to the cytoplasm. The catalysed reaction is Thiol-dependent hydrolysis of ester, thioester, amide, peptide and isopeptide bonds formed by the C-terminal Gly of ubiquitin (a 76-residue protein attached to proteins as an intracellular targeting signal).. Its function is as follows. Deubiquitinase that plays a role in several cellular processes including transcriptional regulation, cell cycle progression or innate immunity. As part of the transcription regulatory histone acetylation (HAT) complex SAGA, catalyzes the deubiquitination of both histones H2A and H2B, thereby acting as a transcriptional coactivator. Recruited to specific gene promoters by activators such as MYC, where it is required for transcription. Facilitates cell-cycle progression by stabilizing CCNB1 and antagonizing its proteasome-mediated degradation in a cell cycle-specific manner. Modulates cell cycle progression and apoptosis also by antagonizing TP53 transcriptional activation through deacetylase SIRT1 stabilization. Plays multiple roles in immunity and inflammation. Participates in antiviral response by deubiquitinating the importin KPNA2, leading to IRF3 nuclear translocation and subsequent type I interferon production. Acts as a central regulator of type III IFN signaling by negatively regulating STING1 activation and ubiquitination. Inhibits NLRP3 inflammasome activation by promoting NLRP3 degradation through ATG5-dependent autophagy. Deubiquitinates CD274 to induce its stabilization and thereby participates in maintenance of immune tolerance to self. Controls necroptotic cell death by regulating RIPK3 phosphorylation and ubiquitination. During bacterial infection, promotes pro-inflammatory response by targeting TRAF6 and removing its 'Lys-48'-linked polyubiquitination. The protein is Ubiquitin carboxyl-terminal hydrolase 22 (USP22) of Homo sapiens (Human).